Reading from the N-terminus, the 425-residue chain is Serine--tRNA ligase (425 aa).

230–232 (TSE) is a binding site for L-serine. ATP-binding positions include 261 to 263 (RRE) and V277. L-serine is bound at residue E284. 348 to 351 (ELTS) is a binding site for ATP. An L-serine-binding site is contributed by T382.

Belongs to the class-II aminoacyl-tRNA synthetase family. Type-1 seryl-tRNA synthetase subfamily. In terms of assembly, homodimer. The tRNA molecule binds across the dimer.

It is found in the cytoplasm. It catalyses the reaction tRNA(Ser) + L-serine + ATP = L-seryl-tRNA(Ser) + AMP + diphosphate + H(+). The enzyme catalyses tRNA(Sec) + L-serine + ATP = L-seryl-tRNA(Sec) + AMP + diphosphate + H(+). It participates in aminoacyl-tRNA biosynthesis; selenocysteinyl-tRNA(Sec) biosynthesis; L-seryl-tRNA(Sec) from L-serine and tRNA(Sec): step 1/1. In terms of biological role, catalyzes the attachment of serine to tRNA(Ser). Is also able to aminoacylate tRNA(Sec) with serine, to form the misacylated tRNA L-seryl-tRNA(Sec), which will be further converted into selenocysteinyl-tRNA(Sec). The polypeptide is Serine--tRNA ligase (Streptomyces coelicolor (strain ATCC BAA-471 / A3(2) / M145)).